A 296-amino-acid polypeptide reads, in one-letter code: Phosphoribosylaminoimidazole-succinocarboxamide synthase (296 aa).

This sequence belongs to the SAICAR synthetase family.

The catalysed reaction is 5-amino-1-(5-phospho-D-ribosyl)imidazole-4-carboxylate + L-aspartate + ATP = (2S)-2-[5-amino-1-(5-phospho-beta-D-ribosyl)imidazole-4-carboxamido]succinate + ADP + phosphate + 2 H(+). It functions in the pathway purine metabolism; IMP biosynthesis via de novo pathway; 5-amino-1-(5-phospho-D-ribosyl)imidazole-4-carboxamide from 5-amino-1-(5-phospho-D-ribosyl)imidazole-4-carboxylate: step 1/2. The polypeptide is Phosphoribosylaminoimidazole-succinocarboxamide synthase (Desulfotalea psychrophila (strain LSv54 / DSM 12343)).